Reading from the N-terminus, the 660-residue chain is MKIIYQEQQNECGICVIGMLANAIHDEKYVHDELLEQINLPPNGLSLFEMESYGKKFGLEINSYQLTFQELKELDSKFIIVHFKDHFVIVKNKHENSWEVYDPAKGKYLLTDEKLEKLWTGYAATVAKAFKEIPPVNKSNFFSNFFDFNLVTFYVFIELIIIGISTLLATASRTIITNTVDFGTAVNLVVLVVYFSCLKGLNLLLQVILQLIRNFLFWKQYRGYLGWIIQSLQQKSFVYFSNKSPNQLIERQFYLKEVLSFFNFYIPNLIISCVVALIIGVLIGINQLEFLLIAIAQIVVNAGLFCYDFFFTKKITKKEIPYVELQNKISLQLDENLREEQNKKRFNFLMLNFRKALLQNQNINNQKEINRLTIENIKSFFQQGFDFAILGLGVIGIIEQRYQLSFLFYVFGIQSLFSTYATRIVQFGAAINIYHYCREKLVNLFIETKKDEGIKVNWQCPDEISLENLSVTLNQHVDLANLSLKIKNETVIFGQNGSGKSTFLKILTGRGFEYTGNIKFNNVDLKRCSKEQLFENVYYLKGQNLMQTEANDFGFSEALFNNQNPHIYQLLFDAGVQNQTKLSSGQKQILQLFLLSNIKNKVILLDECMNAIAPEIKNRVYQLLVKPLTLNNFVVLVEHDLSFASEAQNKINLTNYLRNS.

One can recognise a Peptidase C39 domain in the interval 6–126; that stretch reads QEQQNECGIC…KLWTGYAATV (121 aa). Residue Cys12 is part of the active site. The next 6 membrane-spanning stretches (helical) occupy residues 150-170, 188-208, 265-285, 290-310, 379-399, and 402-422; these read LVTFYVFIELIIIGISTLLAT, LVVLVVYFSCLKGLNLLLQVI, YIPNLIISCVVALIIGVLIGI, FLLIAIAQIVVNAGLFCYDFF, SFFQQGFDFAILGLGVIGIIE, and YQLSFLFYVFGIQSLFSTYAT. In terms of domain architecture, ABC transporter spans 464-657; it reads ISLENLSVTL…QNKINLTNYL (194 aa). 494 to 501 provides a ligand contact to ATP; it reads GQNGSGKS.

This sequence belongs to the ABC transporter superfamily.

The protein localises to the cell membrane. This is Putative ABC transporter ATP-binding MG390 from Mycoplasma genitalium (strain ATCC 33530 / DSM 19775 / NCTC 10195 / G37) (Mycoplasmoides genitalium).